Reading from the N-terminus, the 485-residue chain is MERRMKGGYLDQRVPYTFCSKSPGNGSLGEALMVPQGKLMDPGSLPPSDSEDLFQDLSHFQETWLAEAQVPDSDEQFVPDFHSENSFHSPTTRIKKEPQSPRTDPALSCSRKPPLPYHHGEQCLYSSAYDSPRQIAIKSPAPGAPGQSPLQPFSRAEQQQSLLRASSSSQSHPGHGYLGEHSSVFQQPVDMCHSFTSPQGGGREPLPAPYQHQLSEPCPPYPQQNFKQEYHDPLYEQAGQPASSQGGVSGHRYPGAGVVIKQERTDFAYDSDVPGCASMYLHPEGFSGPSPGDGVMGYGYEKSLRPFPDDVCIVPEKFEGDIKQEGIGAFREGPPYQRRGALQLWQFLVALLDDPTNAHFIAWTGRGMEFKLIEPEEVARLWGIQKNRPAMNYDKLSRSLRYYYEKGIMQKVAGERYVYKFVCEPEALFSLAFPDNQRPALKAEFDRPVSEEDTVPLSHLDESPAYLPELTGPAPPFGHRGGYSY.

K6 is covalently cross-linked (Glycyl lysine isopeptide (Lys-Gly) (interchain with G-Cter in SUMO2)). Disordered stretches follow at residues 79–114 and 135–214; these read PDFH…RKPP and IAIK…QHQL. A Glycyl lysine isopeptide (Lys-Gly) (interchain with G-Cter in SUMO) cross-link involves residue K95. At S100 the chain carries Phosphoserine. A Glycyl lysine isopeptide (Lys-Gly) (interchain with G-Cter in SUMO2) cross-link involves residue K138. 2 positions are modified to phosphoserine: S139 and S148. The segment covering 158 to 171 has biased composition (low complexity); sequence QQQSLLRASSSSQS. Phosphoserine is present on S215. Residues K227 and K261 each participate in a glycyl lysine isopeptide (Lys-Gly) (interchain with G-Cter in SUMO) cross-link. Residue K323 forms a Glycyl lysine isopeptide (Lys-Gly) (interchain with G-Cter in SUMO2) linkage. The segment at residues 342 to 422 is a DNA-binding region (ETS); sequence LQLWQFLVAL…AGERYVYKFV (81 aa).

Belongs to the ETS family. Post-translationally, sumoylated; enhanced upon ERK/MAP kinase pathway activation it positively regulates the transcriptional activator capacity. Sumoylation at Lys-95 probably requires phosphorylation at Ser-100. Transiently polysumoylated and desumoylated by SENP1. Sumoylation is a prerequisite to polyubiquitination which in turn increases proteasomal-mediated degradation. Probably polyubiquitinated by RNF4 and deubiquitinated by USP2. In terms of tissue distribution, epididymis and brain.

Its subcellular location is the nucleus. Its function is as follows. Transcriptional activator. May play a role in keratinocyte differentiation. This chain is ETS translocation variant 4 (Etv4), found in Mus musculus (Mouse).